We begin with the raw amino-acid sequence, 330 residues long: Ribosomal RNA small subunit methyltransferase C (330 aa).

It belongs to the methyltransferase superfamily. RsmC family. Monomer.

It is found in the cytoplasm. The catalysed reaction is guanosine(1207) in 16S rRNA + S-adenosyl-L-methionine = N(2)-methylguanosine(1207) in 16S rRNA + S-adenosyl-L-homocysteine + H(+). Functionally, specifically methylates the guanine in position 1207 of 16S rRNA in the 30S particle. The sequence is that of Ribosomal RNA small subunit methyltransferase C from Haemophilus influenzae (strain PittGG).